The following is a 400-amino-acid chain: Large envelope protein (400 aa).

N-acetylmethionine is present on Met-1. Disordered regions lie at residues 1-64 (MGGW…GAFG), 85-118 (LTTV…SHPQ), and 143-174 (PGGS…PAPN). Gly-2 carries the N-myristoyl glycine; by host lipid modification. Positions 2 to 119 (GGWSSKPRQG…PPLRDSHPQA (118 aa)) are pre-S1. Residues 2–174 (GGWSSKPRQG…SSRTGDPAPN (173 aa)) are pre-S. At 2-181 (GGWSSKPRQG…APNMESTTSG (180 aa)) the chain is on the virion surface; in external conformation side. Topologically, residues 2–253 (GGWSSKPRQG…PGYRWMCLRR (252 aa)) are intravirion; in internal conformation. An N-linked (GlcNAc...) asparagine glycan is attached at Trp-4. Residues 96–106 (STNRQSGRQPT) are compositionally biased toward polar residues. Positions 120–174 (MQWNSTTFHQVLLDPRVRGLYFPPGGSSSGTVNPVPTTASPISSISSRTGDPAPN) are pre-S2. Low complexity predominate over residues 155–166 (PTTASPISSISS). The chain crosses the membrane as a helical span at residues 182–202 (FLGPLLVLQAGFFLLTRILTI). Topologically, residues 203–253 (PQSLDSWWTSLNFLGGAPTCPGQNSQSPTSNHSPTSCPPICPGYRWMCLRR) are intravirion; in external conformation. Residues 254–274 (FIIFLFILLLCLIFLLVLLDY) form a helical membrane-spanning segment. Over 275–348 (QGMLPVCPLL…GASVRFSWLS (74 aa)) the chain is Virion surface. An N-linked (GlcNAc...) asparagine; by host glycan is attached at Asn-320. The chain crosses the membrane as a helical span at residues 349–369 (LLVPFVQWFVGLSPTVWLSVI). The Intravirion portion of the chain corresponds to 370-375 (WMMWYW). The helical transmembrane segment at 376–398 (GPSLYNILSPFLPLLPIFFCLWV) threads the bilayer. Residues 399–400 (YI) lie on the Virion surface side of the membrane.

The protein belongs to the orthohepadnavirus major surface antigen family. As to quaternary structure, in its internal form (Li-HBsAg), interacts with the capsid protein and with the isoform S. Interacts with host chaperone CANX. Associates with host chaperone CANX through its pre-S2 N glycan; this association may be essential for isoform M proper secretion. In terms of assembly, interacts with isoform L. Interacts with the antigens of satellite virus HDV (HDVAgs); this interaction is required for encapsidation of HDV genomic RNA. Isoform M is N-terminally acetylated by host at a ratio of 90%, and N-glycosylated by host at the pre-S2 region. In terms of processing, myristoylated.

Its subcellular location is the virion membrane. The large envelope protein exists in two topological conformations, one which is termed 'external' or Le-HBsAg and the other 'internal' or Li-HBsAg. In its external conformation the protein attaches the virus to cell receptors and thereby initiating infection. This interaction determines the species specificity and liver tropism. This attachment induces virion internalization predominantly through caveolin-mediated endocytosis. The large envelope protein also assures fusion between virion membrane and endosomal membrane. In its internal conformation the protein plays a role in virion morphogenesis and mediates the contact with the nucleocapsid like a matrix protein. In terms of biological role, the middle envelope protein plays an important role in the budding of the virion. It is involved in the induction of budding in a nucleocapsid independent way. In this process the majority of envelope proteins bud to form subviral lipoprotein particles of 22 nm of diameter that do not contain a nucleocapsid. The chain is Large envelope protein from Homo sapiens (Human).